The following is a 383-amino-acid chain: MGEPYLLTPGPLTTAFSVKDAMLRDWGSWDGDFRGMTAELRRELLAIAGDESGQYDCVPMQGSGSFSVEAMLGSFIPRDGKVLVLMNGAYGQRIAQTLKYLGRAHVSIDKGDYMPPRGSEVAAALDADPAITHVVVVHCETSSGILNPLKEISEAVYSRGRKLLVDSMSAFGAVPAGVGDFRYEAIVSSANKCIEGVPGFGFVIARKSELEAAKDRSHSLSLDVHAQWAYMNKTGQWRFTPPTHVVAAFLEALRLHRKEGGVAGRGARYANNRDVMVAGMRQLGFETLLGDEWLSPIIVTFFSPAHPNFKFERFYELMKARGFIIYPGKLTVVDSFRIGCIGQMDSHVMQKVVAAAAESLAKMRVDTATPPALALAERARLAA.

Lys192 is subject to N6-(pyridoxal phosphate)lysine.

The protein belongs to the class-V pyridoxal-phosphate-dependent aminotransferase family. PhnW subfamily. As to quaternary structure, homodimer. It depends on pyridoxal 5'-phosphate as a cofactor.

It catalyses the reaction (2-aminoethyl)phosphonate + pyruvate = phosphonoacetaldehyde + L-alanine. Involved in phosphonate degradation. The polypeptide is 2-aminoethylphosphonate--pyruvate transaminase (Rhizobium meliloti (strain 1021) (Ensifer meliloti)).